The chain runs to 882 residues: Alanine--tRNA ligase (882 aa).

Zn(2+) contacts are provided by histidine 568, histidine 572, cysteine 670, and histidine 674.

This sequence belongs to the class-II aminoacyl-tRNA synthetase family. Zn(2+) is required as a cofactor.

The protein resides in the cytoplasm. It carries out the reaction tRNA(Ala) + L-alanine + ATP = L-alanyl-tRNA(Ala) + AMP + diphosphate. Functionally, catalyzes the attachment of alanine to tRNA(Ala) in a two-step reaction: alanine is first activated by ATP to form Ala-AMP and then transferred to the acceptor end of tRNA(Ala). Also edits incorrectly charged Ser-tRNA(Ala) and Gly-tRNA(Ala) via its editing domain. The chain is Alanine--tRNA ligase from Lactobacillus johnsonii (strain CNCM I-12250 / La1 / NCC 533).